The sequence spans 1113 residues: StAR-related lipid transfer protein 13 (1113 aa).

Methionine 1 is subject to N-acetylmethionine. The 68-residue stretch at 55–122 folds into the SAM domain; it reads QQEIEAKEAC…LNKCASMRLD (68 aa). 3 disordered regions span residues 164-218, 230-256, and 308-343; these read PVAD…HSAD, SSLPQSTREGLNQSFHPKNEKPTRTRA, and NGDLQTSPPAACRKGLPCSSKSSGESSPLENSSTVS. Residues 179 to 188 show a composition bias toward polar residues; that stretch reads NTASSESVLT. A compositionally biased stretch (low complexity) spans 197–214; sequence SIHSESSGGSDSRSQSGH. Polar residues predominate over residues 230-245; sequence SSLPQSTREGLNQSFH. Low complexity predominate over residues 322–340; sequence GLPCSSKSSGESSPLENSS. Serine 411 is subject to Phosphoserine. Composition is skewed to polar residues over residues 421-435 and 529-549; these read SNGVNWRTGSISLGR and PNQVTLDFEGNSVSEGRTTPS. Disordered stretches follow at residues 421–443 and 514–578; these read SNGVNWRTGSISLGRQQGPGMRE and HSTL…GASL. Positions 663–868 constitute a Rho-GAP domain; the sequence is VPLIVHVQRT…HMITECNRLF (206 aa). The region spanning 899 to 1109 is the START domain; it reads LAESGATFHT…SFQPLVAEGP (211 aa).

As to quaternary structure, homodimer. Interacts with TAX1BP1.

The protein resides in the cytoplasm. The protein localises to the membrane. It localises to the mitochondrion membrane. It is found in the lipid droplet. Functionally, may function as a GTPase-activating protein. The protein is StAR-related lipid transfer protein 13 (Stard13) of Mus musculus (Mouse).